The chain runs to 627 residues: Protein fem-1 homolog B (627 aa).

ANK repeat units follow at residues 45-74 (QRSTPLIIAARNGHAKVVRLLLEHYRVQTQ), 87-116 (DGATALWCAAGAGHFEVVKLLVSHGANVNH), 120-149 (TNSTPLRAACFDGRLDIVKYLVENNANISI), and 153-182 (YDNTCLMIAAYKGHTDVVRYLLEQRADPNA). 3 residues coordinate Zn(2+): His185, Cys186, and His218. ANK repeat units lie at residues 186 to 215 (CGATALHFAAEAGHIDIVKELIKWRAAIVV) and 218 to 248 (HGMTPLKVAAESCKADVVELLLSHADCDRRS). The stretch at 344–377 (SHPIIYRGAVYADNMEFEQCIKLWLHALHLRQKG) is one TPR repeat. ANK repeat units follow at residues 483–527 (EGFS…EVNA) and 531–568 (EGNSALHIIVQYNRPISDFLTLHSIIISLVEAGAHTDM).

The protein belongs to the fem-1 family. As to quaternary structure, component of a CRL2 E3 ubiquitin-protein ligase complex, also named ECS (Elongin BC-CUL2/5-SOCS-box protein) complex, composed of CUL2, Elongin BC (ELOB and ELOC), RBX1 and substrate-specific adapter FEM1B. Homooligomer. Interacts with PPM1F and PHTF1. Interacts with the death domain of FAS/TNFRSF6 and TNFRSF1A. Interacts with CHEK1. Interacts with NKX3-1. As to expression, expressed in pancreatic islets, within both beta cells and non-beta cells (at protein level). Highly expressed in adult testis; expressed in all types of spermatogonia. Also expressed in the prostate of neonatal mice.

It is found in the cytoplasm. The protein resides in the nucleus. The protein operates within protein modification; protein ubiquitination. Activity of the CRL2(FEM1B) complex toward FNIP1 is inhibited by BEX family proteins (BEX1, BEX2, BEX3 and/or BEX4) in absence of reductive stress. Mechanistically, BEX proteins act as pseudosubstrate inhibitors that associate with FEM1B via zinc in absence of reductive stress, thereby preventing association between FEM1B and FNIP1. Its function is as follows. Substrate-recognition component of a Cul2-RING (CRL2) E3 ubiquitin-protein ligase complex of the DesCEND (destruction via C-end degrons) pathway, which recognizes a C-degron located at the extreme C terminus of target proteins, leading to their ubiquitination and degradation. The C-degron recognized by the DesCEND pathway is usually a motif of less than ten residues and can be present in full-length proteins, truncated proteins or proteolytically cleaved forms. The CRL2(FEM1B) complex specifically recognizes proteins ending with -Gly-Leu-Asp-Arg, such as CDK5R1, leading to their ubiquitination and degradation. Also acts as a regulator of the reductive stress response by mediating ubiquitination of reduced FNIP1: in response to reductive stress, the CRL2(FEM1B) complex specifically recognizes a conserved Cys degron in FNIP1 when this degron is reduced, leading to FNIP1 degradation and subsequent activation of mitochondria to recalibrate reactive oxygen species (ROS). Mechanistically, recognizes and binds reduced FNIP1 through two interface zinc ions, which act as a molecular glue that recruit reduced FNIP1 to FEM1B. Promotes ubiquitination of GLI1, suppressing GLI1 transcriptional activator activity. Promotes ubiquitination and degradation of ANKRD37. Promotes ubiquitination and degradation of SLBP. Involved in apoptosis by acting as a death receptor-associated protein that mediates apoptosis. Also involved in glucose homeostasis in pancreatic islet. May also act as an adapter/mediator in replication stress-induced signaling that leads to the activation of CHEK1. This is Protein fem-1 homolog B from Mus musculus (Mouse).